Here is a 195-residue protein sequence, read N- to C-terminus: Imidazoleglycerol-phosphate dehydratase (195 aa).

This sequence belongs to the imidazoleglycerol-phosphate dehydratase family.

It is found in the cytoplasm. It carries out the reaction D-erythro-1-(imidazol-4-yl)glycerol 3-phosphate = 3-(imidazol-4-yl)-2-oxopropyl phosphate + H2O. It functions in the pathway amino-acid biosynthesis; L-histidine biosynthesis; L-histidine from 5-phospho-alpha-D-ribose 1-diphosphate: step 6/9. This is Imidazoleglycerol-phosphate dehydratase from Clostridium botulinum (strain Alaska E43 / Type E3).